An 870-amino-acid chain; its full sequence is DNA mismatch repair protein MutS (870 aa).

Position 620–627 (620–627 (GPNMAGKS)) interacts with ATP.

Belongs to the DNA mismatch repair MutS family.

Functionally, this protein is involved in the repair of mismatches in DNA. It is possible that it carries out the mismatch recognition step. This protein has a weak ATPase activity. The protein is DNA mismatch repair protein MutS of Acetivibrio thermocellus (strain ATCC 27405 / DSM 1237 / JCM 9322 / NBRC 103400 / NCIMB 10682 / NRRL B-4536 / VPI 7372) (Clostridium thermocellum).